An 85-amino-acid polypeptide reads, in one-letter code: Sec-independent protein translocase protein TatA (85 aa).

The chain crosses the membrane as a helical span at residues 7 to 27; the sequence is VFGSLGWTEILLILFIALLLF. The disordered stretch occupies residues 50–85; the sequence is LTGESDDSSQQISQEQERSVPKEETKTSKSKKSKSA. Over residues 64–76 the composition is skewed to basic and acidic residues; that stretch reads EQERSVPKEETKT.

This sequence belongs to the TatA/E family. In terms of assembly, forms a complex with TatC.

The protein resides in the cell inner membrane. In terms of biological role, part of the twin-arginine translocation (Tat) system that transports large folded proteins containing a characteristic twin-arginine motif in their signal peptide across membranes. TatA could form the protein-conducting channel of the Tat system. This is Sec-independent protein translocase protein TatA from Leptospira interrogans serogroup Icterohaemorrhagiae serovar Lai (strain 56601).